The chain runs to 174 residues: Repair DNA polymerase X (174 aa).

Residues 42–51 (REEKMLNDVD) form an involved in ssDNA binding region. Residues Asp49 and Asp51 each coordinate Mg(2+). Residues Cys81 and Cys86 are joined by a disulfide bond. Asp100 contributes to the Mg(2+) binding site.

This sequence belongs to the DNA polymerase type-X family. It depends on Mg(2+) as a cofactor.

The protein localises to the virion. The enzyme catalyses DNA(n) + a 2'-deoxyribonucleoside 5'-triphosphate = DNA(n+1) + diphosphate. Error-prone polymerase lacking a proofreading 3'-5' exonuclease which catalyzes the gap-filling reaction during the DNA repair process. Specifically binds intermediates in the single-nucleotide base-excision repair process. Also catalyzes DNA polymerization with low nucleotide-insertion fidelity. Probably acts as a strategic DNA mutase, which gives rise to a rapid emergence of variants. Generates mismatched G-G pairs, in that case, the polymerase first binds the deoxynucleotide followed by mismatch formation. Together with the viral DNA ligase, fills the single nucleotide gaps generated by the AP endonuclease. Binds DNA with high affinity via the helix alphaE. This African swine fever virus (isolate Tick/South Africa/Pretoriuskop Pr4/1996) (ASFV) protein is Repair DNA polymerase X.